The following is a 626-amino-acid chain: PEX5-related protein (626 aa).

3 disordered regions span residues 1–20 (MYQG…LSSD), 118–167 (VSQT…SSLD), and 181–235 (KFHG…ASEL). Residues 181–198 (KFHGDRNTKGHPMAERKS) are compositionally biased toward basic and acidic residues. Serine 205 carries the post-translational modification Phosphoserine. Residues 225–235 (SALNSESASEL) show a composition bias toward low complexity. Phosphoserine occurs at positions 253, 257, and 261. TPR repeat units lie at residues 326-359 (WPGA…DPGD), 360-393 (AEAW…QPNN), and 395-427 (KALM…NPKY). Residues serine 445 and serine 447 each carry the phosphoserine modification. TPR repeat units lie at residues 474 to 507 (PDLQ…RPED), 509 to 541 (SLWN…QPGF), and 543 to 575 (RSRY…QRKS).

It belongs to the peroxisomal targeting signal receptor family. As to quaternary structure, interacts with RAB8B. Forms an obligate 4:4 complex with HCN2. May interact with the C-terminal PTS1-type tripeptide peroxisomal targeting signal (SKL-type); the relevance of such interaction is however unclear. Interacts with HCN3. Interacts with HCN4 with a 4:4 HCN4:PEX5L stoichiometry; reduces the effects of cAMP on the voltage-dependence and rate of activation of HCN4. Mainly expressed in brain. Also expressed in pancreas, testis and pituitary.

It localises to the cytoplasm. The protein resides in the membrane. In terms of biological role, accessory subunit of hyperpolarization-activated cyclic nucleotide-gated (HCN) channels, regulating their cell-surface expression and cyclic nucleotide dependence. The protein is PEX5-related protein (PEX5L) of Homo sapiens (Human).